The following is a 341-amino-acid chain: L-threonine 3-dehydrogenase (341 aa).

Residue cysteine 38 participates in Zn(2+) binding. Active-site charge relay system residues include threonine 40 and histidine 43. Positions 63, 64, 93, 96, 99, and 107 each coordinate Zn(2+). NAD(+)-binding positions include isoleucine 175, aspartate 195, arginine 200, 262 to 264 (LGI), and 286 to 287 (IY).

This sequence belongs to the zinc-containing alcohol dehydrogenase family. In terms of assembly, homotetramer. Zn(2+) is required as a cofactor.

It localises to the cytoplasm. The enzyme catalyses L-threonine + NAD(+) = (2S)-2-amino-3-oxobutanoate + NADH + H(+). The protein operates within amino-acid degradation; L-threonine degradation via oxydo-reductase pathway; glycine from L-threonine: step 1/2. In terms of biological role, catalyzes the NAD(+)-dependent oxidation of L-threonine to 2-amino-3-ketobutyrate. This is L-threonine 3-dehydrogenase from Escherichia coli O127:H6 (strain E2348/69 / EPEC).